The primary structure comprises 320 residues: uncharacterized protein (320 aa).

This is an uncharacterized protein from Bacillus subtilis (strain 168).